Consider the following 225-residue polypeptide: uncharacterized protein (225 aa).

The chain crosses the membrane as a helical span at residues 181–203; the sequence is INIFVVFMFIIYLLFYIISSTVF.

The protein localises to the cell membrane. This is an uncharacterized protein from Bacillus anthracis.